The primary structure comprises 863 residues: Ubiquitin carboxyl-terminal hydrolase 13 (863 aa).

The residue at position 114 (S114) is a Phosphoserine. T122 carries the phosphothreonine modification. The UBP-type; degenerate zinc-finger motif lies at 187–295 (PVSKYANNLT…KHLAHFGIDM (109 aa)). Zn(2+)-binding residues include C211, C214, C231, and H244. K311 is covalently cross-linked (Glycyl lysine isopeptide (Lys-Gly) (interchain with G-Cter in SUMO2)). Residues 336-861 (TGLKNLGNSC…LGYMYFYRRI (526 aa)) form the USP domain. The active-site Nucleophile is the C345. A Glycyl lysine isopeptide (Lys-Gly) (interchain with G-Cter in SUMO2) cross-link involves residue K405. UBA domains follow at residues 652–693 (DIDE…IVVH) and 727–767 (QPPE…IFSH). H823 (proton acceptor) is an active-site residue.

Belongs to the peptidase C19 family. In terms of assembly, interacts with UFD1. Interacts (via UBA domains) with SIAH2 (when ubiquitinated). Interacts with BAG6; the interaction is direct and may mediate UBL4A deubiquitination. Interacts (via UBA 2 domain) with AMFR; the interaction is direct. Interacts with UBL4A; may be indirect via BAG6. Interacts with NEDD4.

The protein localises to the cytoplasm. The catalysed reaction is Thiol-dependent hydrolysis of ester, thioester, amide, peptide and isopeptide bonds formed by the C-terminal Gly of ubiquitin (a 76-residue protein attached to proteins as an intracellular targeting signal).. Specifically inhibited by spautin-1 (specific and potent autophagy inhibitor-1), a derivative of MBCQ that binds to USP13 and inhibits deubiquitinase activity. Regulated by PIK3C3/VPS34-containing complexes. The weak deubiquitinase activity in vitro suggests the existence of some mechanism that activates the enzyme. In terms of biological role, deubiquitinase that mediates deubiquitination of target proteins such as BECN1, MITF, SKP2 and USP10 and is involved in various processes such as autophagy, endoplasmic reticulum-associated degradation (ERAD), cell cycle progression or DNA damage response. Component of a regulatory loop that controls autophagy and p53/TP53 levels: mediates deubiquitination of BECN1, a key regulator of autophagy, leading to stabilize the PIK3C3/VPS34-containing complexes. Alternatively, forms with NEDD4 a deubiquitination complex, which subsequently stabilizes VPS34 to promote autophagy. Also deubiquitinates USP10, an essential regulator of p53/TP53 stability. In turn, PIK3C3/VPS34-containing complexes regulate USP13 stability, suggesting the existence of a regulatory system by which PIK3C3/VPS34-containing complexes regulate p53/TP53 protein levels via USP10 and USP13. Recruited by nuclear UFD1 and mediates deubiquitination of SKP2, thereby regulating endoplasmic reticulum-associated degradation (ERAD). Also regulates ERAD through the deubiquitination of UBL4A a component of the BAG6/BAT3 complex. Mediates stabilization of SIAH2 independently of deubiquitinase activity: binds ubiquitinated SIAH2 and acts by impairing SIAH2 autoubiquitination. Regulates the cell cycle progression by stabilizing cell cycle proteins such as SKP2 and AURKB. In addition, plays an important role in maintaining genomic stability and in DNA replication checkpoint activation via regulation of RAP80 and TOPBP1. Deubiquitinates the multifunctional protein HMGB1 and subsequently drives its nucleocytoplasmic localization and its secretion. Positively regulates type I and type II interferon signalings by deubiquitinating STAT1 but negatively regulates antiviral response by deubiquitinating STING1. This chain is Ubiquitin carboxyl-terminal hydrolase 13 (USP13), found in Bos taurus (Bovine).